A 278-amino-acid chain; its full sequence is Diaminopimelate epimerase (278 aa).

Substrate contacts are provided by asparagine 13, glutamine 46, and asparagine 66. The active-site Proton donor is the cysteine 75. Substrate is bound by residues 76 to 77 (GN), asparagine 159, asparagine 192, and 210 to 211 (ER). Cysteine 219 acts as the Proton acceptor in catalysis. Position 220 to 221 (220 to 221 (GT)) interacts with substrate.

Belongs to the diaminopimelate epimerase family. As to quaternary structure, homodimer.

Its subcellular location is the cytoplasm. It carries out the reaction (2S,6S)-2,6-diaminopimelate = meso-2,6-diaminopimelate. It functions in the pathway amino-acid biosynthesis; L-lysine biosynthesis via DAP pathway; DL-2,6-diaminopimelate from LL-2,6-diaminopimelate: step 1/1. Catalyzes the stereoinversion of LL-2,6-diaminopimelate (L,L-DAP) to meso-diaminopimelate (meso-DAP), a precursor of L-lysine and an essential component of the bacterial peptidoglycan. The sequence is that of Diaminopimelate epimerase from Laribacter hongkongensis (strain HLHK9).